We begin with the raw amino-acid sequence, 77 residues long: U8-lycotoxin-Ls1w (77 aa).

Residues 1–20 (MKLIIFTGLVLFAIVSLIEA) form the signal peptide. Residues 21 to 26 (QAENEK) constitute a propeptide that is removed on maturation.

This sequence belongs to the neurotoxin 19 (CSTX) family. 08 (U8-Lctx) subfamily. Post-translationally, contains 4 disulfide bonds. In terms of tissue distribution, expressed by the venom gland.

The protein resides in the secreted. This is U8-lycotoxin-Ls1w from Lycosa singoriensis (Wolf spider).